The sequence spans 120 residues: Dynein 11 kDa light chain, flagellar outer arm (120 aa).

This sequence belongs to the dynein light chain family. Consists of at least 3 heavy chains (alpha, beta and gamma), 2 intermediate chains and 8 light chains.

It localises to the cytoplasm. The protein resides in the cytoskeleton. Its subcellular location is the flagellum axoneme. The chain is Dynein 11 kDa light chain, flagellar outer arm from Chlamydomonas reinhardtii (Chlamydomonas smithii).